A 239-amino-acid chain; its full sequence is Protein TIPIN homolog (239 aa).

Acidic residues-rich tracts occupy residues Met1 to Asp14 and Asp156 to Phe166. Disordered regions lie at residues Met1–Ile38 and Glu135–Trp239. 2 stretches are compositionally biased toward basic and acidic residues: residues Leu169–Asn193 and Tyr206–Ala223. Residues Glu224–Trp239 are compositionally biased toward acidic residues.

It belongs to the CSM3 family.

The protein localises to the cytoplasm. It localises to the nucleus. Functionally, required for normal progression of S-phase. Important for cell survival after DNA damage or replication stress. In Caenorhabditis briggsae, this protein is Protein TIPIN homolog.